Reading from the N-terminus, the 197-residue chain is Prefoldin subunit 3 (197 aa).

Ala-2 is modified (N-acetylalanine). Lys-59 is modified (N6-acetyllysine).

The protein belongs to the prefoldin subunit alpha family. As to quaternary structure, heterohexamer of two PFD-alpha type and four PFD-beta type subunits. Binds to the C-terminal part of VHL. In terms of tissue distribution, ubiquitous.

It is found in the cytoplasm. The protein localises to the nucleus. Functionally, binds specifically to cytosolic chaperonin (c-CPN) and transfers target proteins to it. Binds to nascent polypeptide chain and promotes folding in an environment in which there are many competing pathways for nonnative proteins. This is Prefoldin subunit 3 (VBP1) from Homo sapiens (Human).